Reading from the N-terminus, the 374-residue chain is MDALCEANGTFAINLLKMLGEEDHLRNVFFSPLSLSSVLTMVLMGAKGNTAAQMSQALCLNESGDVHRGFQSLLREVSTSGPKCLLRTANRLFGEKTCDFLPAFKESCQKFYQADLEELSFAEDTEECRKHINDWVMEKTDGKISEILGAGTVSPLTKLVLVNAIYFKGKWNEQFDRKHTRGMPFKTNQEKKTVQMMFKQAKFKMGHVEEVPAQVLELPYVGAELSMLILLPDENTDLAVVEKALTYEKFRTWTSPEKLTEEKVQVFLPRLKLEASYDLEAFLRSLGMTDAFEEAKADFSGMSAKKNVPMSKVAHKCFVEVNEEGTEAAGATAVVRNSRCCRMEPKFCADHPFLFFIRHRETNSILFCGRFSSP.

It belongs to the serpin family. Ov-serpin subfamily.

Its subcellular location is the cytoplasm. Functionally, has an important role in epithelial desmosome-mediated cell-cell adhesion. This Bos taurus (Bovine) protein is Serpin B8 (SERPINB8).